The chain runs to 204 residues: 5'-deoxynucleotidase HDDC2 (204 aa).

Ala2 carries the post-translational modification N-acetylalanine. 2 positions are modified to phosphoserine: Ser3 and Ser5. In terms of domain architecture, HD spans 46–148; it reads VSDHMYRMAV…VKQLDQCEMI (103 aa). The a divalent metal cation site is built by His49, His77, Asp78, Glu81, Asp86, Ile87, and Asp143. At Ser204 the chain carries Phosphoserine.

The protein belongs to the HDDC2 family. Homodimer. Requires Mn(2+) as cofactor. The cofactor is Co(2+). It depends on Mg(2+) as a cofactor.

The enzyme catalyses a 2'-deoxyribonucleoside 5'-phosphate + H2O = a 2'-deoxyribonucleoside + phosphate. Functionally, catalyzes the dephosphorylation of the nucleoside 5'-monophosphates deoxyadenosine monophosphate (dAMP), deoxycytidine monophosphate (dCMP), deoxyguanosine monophosphate (dGMP) and deoxythymidine monophosphate (dTMP). This chain is 5'-deoxynucleotidase HDDC2 (HDDC2), found in Homo sapiens (Human).